Here is a 295-residue protein sequence, read N- to C-terminus: Pyridoxal 5'-phosphate synthase subunit PdxS (295 aa).

D-ribose 5-phosphate is bound at residue D25. The active-site Schiff-base intermediate with D-ribose 5-phosphate is K82. G154 serves as a coordination point for D-ribose 5-phosphate. R166 contacts D-glyceraldehyde 3-phosphate. D-ribose 5-phosphate contacts are provided by residues G215 and G236 to S237.

This sequence belongs to the PdxS/SNZ family. In terms of assembly, in the presence of PdxT, forms a dodecamer of heterodimers.

It carries out the reaction aldehydo-D-ribose 5-phosphate + D-glyceraldehyde 3-phosphate + L-glutamine = pyridoxal 5'-phosphate + L-glutamate + phosphate + 3 H2O + H(+). It participates in cofactor biosynthesis; pyridoxal 5'-phosphate biosynthesis. Functionally, catalyzes the formation of pyridoxal 5'-phosphate from ribose 5-phosphate (RBP), glyceraldehyde 3-phosphate (G3P) and ammonia. The ammonia is provided by the PdxT subunit. Can also use ribulose 5-phosphate and dihydroxyacetone phosphate as substrates, resulting from enzyme-catalyzed isomerization of RBP and G3P, respectively. This chain is Pyridoxal 5'-phosphate synthase subunit PdxS, found in Bacillus mycoides (strain KBAB4) (Bacillus weihenstephanensis).